We begin with the raw amino-acid sequence, 1353 residues long: MSFFYSLFAPLIFLVTFIYNHVLLILFTVCIIGAAAFFVSYYLFGYSNTPSSASSSATPSSRNSPNKERSKKVPTILETDNEDDEIRVNGSPKSGTPTNTQTIEPPTSLNLNMVNSASGSNLSGARRMRKRDWAKKLYKSLVQDSPGRTPTDESSDEENANVVMGGGSVPRRRSKHGNSSRRRQSTAFQLAKDLIRRGSRSYFRQNQENNKDTRVRPPQEFFEPTDLPEIPQNLQPEIFYILHNLKMLELPSEWKLDPREIEVRSFQAGDYIVKPGESDDAIYVAIDGELTVHIRHMEGKEYLVKCIPAGGSFFSLLSMLDILMDFPSIFRTVALKAADPCRVAKFPITSFRESYHKNPEAWIRPIQIVITRLLHVTLTTLHQYMGLSSELMRRRRDDDRHRNGSSTSKLQLSLSLKKKEKPFNINDNEQDQLIVARKWMAEAFGLVADDVVSEQIGSKIHLESYEAGHVIIEQGAEEEVLMMVLHGNLILAQYGSDFFAQIERESLFDEENNEEDESAVIRVTARELVGGLQILTNEPSFYTIRAAVQTRVAIMKKKDFSAFLEAHPEIYLPVAHSVLRRLSPFLRGVDFALDWVLVDSGHACYRAGDMADSLFVVLSGRLRSVEKKTVVEEFGRGDVLGMMEVLTKKPRATTVLAVRFSQLARVPEGLLNFIKMQYPQVGFRLVQLLGQYYSQTNRRAPFAAPTVIRTNELGATDPMSHIKNLHTIAVVPASPDVPLVPFTCELYHALSSNLRVLRLSSQKVAACLDPSVLEKQADFRLMHWLNVQEDTYPLVIYECDFTQTNWTRRCLRQADAILVVAIGGKTPEKQTLMRELMNMNQDGVRTNKELILLWPESTKTPSGTIEWLKNSYFSGHHHIRAPKRMLQWNRKFRKMSRAEVMTPTSVENEVIEYYEKNVFWTPDRRSDFSRLARILTGNAIGLVLGGGGARGAAHVGVLRALREEGIPVDIVGGTSIGSLIGGLYAETPDDVVVETRAASWFNGMSSLWRKLLDLTYAHSAMFTGAQFNFSIKDLFEERLIEDLWISYFCISTDISTSEMRVHRSGPLWAYCRASMSLAGYLPPLCDPQDGHLLLDGGYVNNVPADVMRNLGARCVIACDVGSIEETNLYDYGDSLSGMWVLLKRLNPFGTPPRILNMEEIQSRLAYVSCVRQLEVVKKASYCRYLRPPIEPFKTLDFPKFQEIMELGLKYGREACHELITNDRAGILGDEKETRKFKRQQSRREKPDVSRAVSFTDLAAAMSKIPVVRPTLRHSMSLNPSANGPVGRAGDHFLLDDDLFNDTDYYEEESSQSENGNESFTEDEDLVIGPPSSSSSGGNVSENPRGTTPRPPSS.

A helical membrane pass occupies residues 12 to 32 (IFLVTFIYNHVLLILFTVCII). Positions 49-64 (TPSSASSSATPSSRNS) are enriched in low complexity. Disordered regions lie at residues 49-188 (TPSS…STAF) and 199-218 (SRSY…VRPP). Residues 91-123 (SPKSGTPTNTQTIEPPTSLNLNMVNSASGSNLS) are compositionally biased toward polar residues. 2 stretches are compositionally biased toward basic residues: residues 126 to 138 (RRMR…KKLY) and 170 to 184 (PRRR…RRRQ). Residues 245–372 (LKML…VITR), 444–581 (FGLV…VLRR), and 570–692 (IYLP…LGQY) contribute to the a nucleoside 3',5'-cyclic phosphate site. The region spanning 942–1108 (LVLGGGGARG…VNNVPADVMR (167 aa)) is the PNPLA domain. The short motif at 946-951 (GGGARG) is the GXGXXG element. The GXSXG signature appears at 973–977 (GTSIG). Ser975 serves as the catalytic Nucleophile. Residue Asp1095 is the Proton acceptor of the active site. The short motif at 1095–1097 (DGG) is the DGA/G element. Disordered stretches follow at residues 1230 to 1249 (EKET…PDVS), 1274 to 1293 (SMSL…DHFL), and 1305 to 1353 (YEEE…PPSS). Residues 1328–1337 (GPPSSSSSGG) show a composition bias toward low complexity.

Belongs to the NTE family.

Its subcellular location is the membrane. This Caenorhabditis elegans protein is Patatin-like phospholipase domain-containing protein ZK370.4.